A 202-amino-acid chain; its full sequence is Putative 3-methyladenine DNA glycosylase (202 aa).

The protein belongs to the DNA glycosylase MPG family.

The sequence is that of Putative 3-methyladenine DNA glycosylase from Alkaliphilus oremlandii (strain OhILAs) (Clostridium oremlandii (strain OhILAs)).